The sequence spans 137 residues: Glutamyl-tRNA(Gln) amidotransferase subunit C, chloroplastic/mitochondrial (137 aa).

This sequence belongs to the GatC family. As to quaternary structure, subunit of the heterotrimeric GatCAB amidotransferase (AdT) complex, composed of A, B and C subunits.

Its subcellular location is the mitochondrion. It localises to the plastid. The protein localises to the chloroplast. It catalyses the reaction L-glutamyl-tRNA(Gln) + L-glutamine + ATP + H2O = L-glutaminyl-tRNA(Gln) + L-glutamate + ADP + phosphate + H(+). Allows the formation of correctly charged Gln-tRNA(Gln) through the transamidation of misacylated Glu-tRNA(Gln) in chloroplasts and mitochondria. The reaction takes place in the presence of glutamine and ATP through an activated gamma-phospho-Glu-tRNA(Gln). The polypeptide is Glutamyl-tRNA(Gln) amidotransferase subunit C, chloroplastic/mitochondrial (Vitis vinifera (Grape)).